A 755-amino-acid chain; its full sequence is MFEIIKKSIEWGGRTLSLETGKIARQADGSVVVNYGDTSILVTVVRKKKEEIVDFLPLNVQFIAKSYAMGRIPGGFFKREGKPSDRETLISRVIDRSIRPLFLEGFHDEISIVCNLLTYDTVNPPEVPALIGAVAALAISGVPFHFIIAGVLVGCDGNNNYILNPSVQEMKVSSLDLFLSGDERSILMVESEAKELPEENILNAIKFGHEHLQPVIKLIKEFADTIGNKFDSFAPIDISDIMQDLEKHSKDFEEAYSQTVKQERAQTLETIRNNILNPLKEAGKDEKLITQAVKNFERSLLRKIIREKGTRIDGRKYDEIRQIEVEVDILSRTHGSALFTRGSTQALVVTALGTTQDEQIVDDIEGDRREHFMLHYNFPSFAVGDASAIRAPGRREIGHGKLAWKAIHPVLPDKSEFPYTIRVVSEIMESDGSSSMATVCGTSLALMDTGVPIKSPVAGIAMGLIKDKNDYVILSDILGDEDYLGDMDFKVAGTSEGITALQMDMKISGISFEIVEKSLEQAKAGRLHILEKMNSVISEHSDDVKGHAPRMVSFYIDKDKISAAIGAKGKNIRSVCERSNAKIEIGDDGKVSVFAMSSAEAEIAKNMMIDSITELEQGAIVDVKVVKIDKSIVELELFNGRKGKMHISEVANQHIESIESILKQGDTFKALVIDFEKGGCPKLSRRRVDQETGDFFEGELYNEEKKDSSNDRDYYNSPFNRKSGHRKRPVHSRSSFSNRNNRPKFGNDDSSSSFY.

Mg(2+)-binding residues include Asp-482 and Asp-488. Residues 549 to 608 (PRMVSFYIDKDKISAAIGAKGKNIRSVCERSNAKIEIGDDGKVSVFAMSSAEAEIAKNMM) enclose the KH domain. The S1 motif domain occupies 618 to 686 (GAIVDVKVVK…KGGCPKLSRR (69 aa)). Positions 702 to 714 (NEEKKDSSNDRDY) are enriched in basic and acidic residues. The segment at 702 to 755 (NEEKKDSSNDRDYYNSPFNRKSGHRKRPVHSRSSFSNRNNRPKFGNDDSSSSFY) is disordered. The span at 722–731 (KSGHRKRPVH) shows a compositional bias: basic residues.

Belongs to the polyribonucleotide nucleotidyltransferase family. Mg(2+) is required as a cofactor.

It is found in the cytoplasm. The catalysed reaction is RNA(n+1) + phosphate = RNA(n) + a ribonucleoside 5'-diphosphate. Involved in mRNA degradation. Catalyzes the phosphorolysis of single-stranded polyribonucleotides processively in the 3'- to 5'-direction. The chain is Polyribonucleotide nucleotidyltransferase from Wolbachia sp. subsp. Brugia malayi (strain TRS).